The sequence spans 291 residues: MAAEEHALTSTEYIKHHLTNMTYGKMPDGTWKLAETAEEAHSMGFTAIHLDSMGWSIGLGVIFCLLFWIVARAANAGVPTKFQSAIEMIIEFVDSSVRDTFHGKSRLIAPLALTIFVWIFLMNLMDLIPVDWIPQVAAFVGANVFGMDPHHVYFKIVPSTDPNITLGMSLSVFVLILFYSIREKGVGGFVGELALNPFNPSNPVAKALLIPVNLILELVTFLARPISLALRLFGNMYAGELIFILIALLPFWIQWALSVPWAIFHILVITLQAFIFMMLTIVYLSMASEKH.

Helical transmembrane passes span 50-70, 108-128, 129-149, 161-181, 203-223, 241-261, and 262-282; these read LDSMGWSIGLGVIFCLLFWIV, IAPLALTIFVWIFLMNLMDLI, PVDWIPQVAAFVGANVFGMDP, DPNITLGMSLSVFVLILFYSI, PVAKALLIPVNLILELVTFLA, LIFILIALLPFWIQWALSVPW, and AIFHILVITLQAFIFMMLTIV.

It belongs to the ATPase A chain family. In terms of assembly, F-type ATPases have 2 components, CF(1) - the catalytic core - and CF(0) - the membrane proton channel. CF(1) has five subunits: alpha(3), beta(3), gamma(1), delta(1), epsilon(1). CF(0) has three main subunits: a(1), b(2) and c(9-12). The alpha and beta chains form an alternating ring which encloses part of the gamma chain. CF(1) is attached to CF(0) by a central stalk formed by the gamma and epsilon chains, while a peripheral stalk is formed by the delta and b chains.

The protein resides in the cell inner membrane. Functionally, key component of the proton channel; it plays a direct role in the translocation of protons across the membrane. The chain is ATP synthase subunit a from Acinetobacter baumannii (strain AB307-0294).